A 390-amino-acid chain; its full sequence is DNA primase small subunit PriS (390 aa).

Residues aspartate 98, aspartate 100, and aspartate 296 contribute to the active site.

Belongs to the eukaryotic-type primase small subunit family. Heterodimer of a small subunit (PriS) and a large subunit (PriL). Mg(2+) serves as cofactor. Mn(2+) is required as a cofactor.

Catalytic subunit of DNA primase, an RNA polymerase that catalyzes the synthesis of short RNA molecules used as primers for DNA polymerase during DNA replication. The small subunit contains the primase catalytic core and has DNA synthesis activity on its own. Binding to the large subunit stabilizes and modulates the activity, increasing the rate of DNA synthesis while decreasing the length of the DNA fragments, and conferring RNA synthesis capability. The DNA polymerase activity may enable DNA primase to also catalyze primer extension after primer synthesis. May also play a role in DNA repair. The sequence is that of DNA primase small subunit PriS from Methanococcoides burtonii (strain DSM 6242 / NBRC 107633 / OCM 468 / ACE-M).